The chain runs to 689 residues: Glycine--tRNA ligase beta subunit (689 aa).

Belongs to the class-II aminoacyl-tRNA synthetase family. Tetramer of two alpha and two beta subunits.

Its subcellular location is the cytoplasm. The catalysed reaction is tRNA(Gly) + glycine + ATP = glycyl-tRNA(Gly) + AMP + diphosphate. The polypeptide is Glycine--tRNA ligase beta subunit (Shigella boydii serotype 4 (strain Sb227)).